The primary structure comprises 221 residues: MEMLRRSSVFAAEVMEVFDRSPTDKELVSQSKVLCRDYIHSRLHRAGIGWSKPEHGSGGTLAEVSSVLLWLGDELEYLRPNVYRNVARQLNITIASENIVSDAFLAVAAEIFSTEYSRKGLEKHKGVTWGKIVSLYAVAGALAVDCVRNGHPAMVHTIVDCMGEFVRKSLASWLKKRGGWADITKCVVSTDPSFHSHWLVTAACACGHYLKAVVFYLLREK.

The BH4 signature appears at 32 to 44 (KVLCRDYIHSRLH). A BH3 motif is present at residues 64–80 (VSSVLLWLGDELEYLRP). The short motif at 110–140 (EIFSTEYSRKGLEKHKGVTWGKIVSLYAVAG) is the BH1 element. The BH2 motif lies at 173 to 187 (WLKKRGGWADITKCV). Residues 198–218 (WLVTAACACGHYLKAVVFYLL) traverse the membrane as a helical segment.

This sequence belongs to the Bcl-2 family. As to expression, strongest expression in ovary and eye, weaker expression in gut, kidney and brain. Little expression in liver or heart.

Its subcellular location is the membrane. Its function is as follows. May play a role in apoptosis. Does not appear to show pro-apoptotic activity when expressed ectopically in early embryos. The polypeptide is Bcl-2-related ovarian killer protein homolog A (Danio rerio (Zebrafish)).